Consider the following 331-residue polypeptide: MDQCPIPTLLEHGNFSQVLFNNVEKFYAPRGDIMCYYTLTEKFIPRRKDWIGIFKVGWKTTQEYYTFMWAPLPKDQNKDSATQQEIQFKAYYLPKDVERYQFCYVDEDGLVRGTSVPFQFCPDPDEDIMVVINKEKVEEMEQLSEELYQQNQELKDKYADLHEQLQRKQVALEATQRVNKTLEHKVEEKASWEKEKASWEEEKASWEEEKASWEEEKASWEEEKASWEEEKASWEEEKASWEEEKASWEEEKASWEEEKASWEEEKASWEEEKASWEEEKASWEEEKASWEKEKASWEEEKASWEKEKAPWEVEKAPWKEVKAYWWNDLHR.

Positions 128–131 (IMVV) match the CLIR motif. A coiled-coil region spans residues 132–309 (INKEKVEEME…EKASWEKEKA (178 aa)). Positions 189-310 (KASWEKEKAS…KASWEKEKAP (122 aa)) are disordered. Residues 190–193 (ASWE) carry the LIR-like motif. The segment at 292-302 (KEKASWEEEKA) is interaction with LGALS8.

It belongs to the CALCOCO family. Dimer. Part of a complex consisting of CALCOCO2, TAX1BP1 and MYO6. Interacts with MYO6. Interacts with GEMIN4. Interacts with ATG8 family members MAP1LC3A, MAP1LC3B, GABARAP, GABARAPL1 and GABARAPL2. Interacts with ATG8 family member MAP1LC3C. Interacts with LGALS8. Interacts with TOM1; the interaction is indirect and is mediated by MYO6, which acts as a bridge between TOM1 and CALCOCO2. Interacts with AZI2.

The protein resides in the cytoplasm. It localises to the perinuclear region. Its subcellular location is the cytoskeleton. It is found in the cytoplasmic vesicle. The protein localises to the autophagosome membrane. Its function is as follows. Xenophagy-specific receptor required for autophagy-mediated intracellular bacteria degradation. Acts as an effector protein of galectin-sensed membrane damage that restricts the proliferation of infecting pathogens upon entry into the cytosol by targeting LGALS8-associated bacteria for autophagy. Initially orchestrates bacteria targeting to autophagosomes and subsequently ensures pathogen degradation by regulating pathogen-containing autophagosome maturation. Bacteria targeting to autophagosomes relies on its interaction with MAP1LC3A, MAP1LC3B and/or GABARAPL2, whereas regulation of pathogen-containing autophagosome maturation requires the interaction with MAP3LC3C. May play a role in ruffle formation and actin cytoskeleton organization and seems to negatively regulate constitutive secretion. The sequence is that of Calcium-binding and coiled-coil domain-containing protein 2 from Mus musculus (Mouse).